Consider the following 278-residue polypeptide: Elongation factor Ts (278 aa).

Residues 80-83 are involved in Mg(2+) ion dislocation from EF-Tu; sequence TDFV.

It belongs to the EF-Ts family.

Its subcellular location is the cytoplasm. Associates with the EF-Tu.GDP complex and induces the exchange of GDP to GTP. It remains bound to the aminoacyl-tRNA.EF-Tu.GTP complex up to the GTP hydrolysis stage on the ribosome. The polypeptide is Elongation factor Ts (Renibacterium salmoninarum (strain ATCC 33209 / DSM 20767 / JCM 11484 / NBRC 15589 / NCIMB 2235)).